The following is a 337-amino-acid chain: Anthranilate phosphoribosyltransferase (337 aa).

5-phospho-alpha-D-ribose 1-diphosphate-binding positions include G81, 84–85 (GD), S89, 91–94 (NVST), 109–117 (KHGNRALSS), and A121. G81 is an anthranilate binding site. Residue S93 participates in Mg(2+) binding. Anthranilate is bound at residue N112. Residue R167 coordinates anthranilate. Mg(2+)-binding residues include D226 and E227.

Belongs to the anthranilate phosphoribosyltransferase family. As to quaternary structure, homodimer. It depends on Mg(2+) as a cofactor.

It carries out the reaction N-(5-phospho-beta-D-ribosyl)anthranilate + diphosphate = 5-phospho-alpha-D-ribose 1-diphosphate + anthranilate. The protein operates within amino-acid biosynthesis; L-tryptophan biosynthesis; L-tryptophan from chorismate: step 2/5. Its function is as follows. Catalyzes the transfer of the phosphoribosyl group of 5-phosphorylribose-1-pyrophosphate (PRPP) to anthranilate to yield N-(5'-phosphoribosyl)-anthranilate (PRA). The sequence is that of Anthranilate phosphoribosyltransferase from Bradyrhizobium diazoefficiens (strain JCM 10833 / BCRC 13528 / IAM 13628 / NBRC 14792 / USDA 110).